Consider the following 263-residue polypeptide: MPEGPEIRRAADNLEAAIKGKPLTDVWFAFAQLKPYESQLTGQLVTRIETRGKALLTHFSNGLTLYSHNQLYGVWRVIDTGEIPQTTRILRVRLQTADKTILLYSASDIEMLTAEQLTTHPFLQRVGPDVLDARLTPEEVKVRLLSPRFRNRQFSGLLLDQAFLAGLGNYLRVEILWQVGLTGQHKAKDLNEAQLNALSHALLDIPRLSYTTRGQSDENKHHGALFRFKVFHRDGEACERCGGIIEKTTLSSRPFYWCPHCQK.

The active-site Schiff-base intermediate with DNA is the Pro2. The active-site Proton donor is Glu3. The active-site Proton donor; for beta-elimination activity is Lys53. DNA is bound by residues Gln70, Arg125, and Asn169. Residues 229 to 263 (KVFHRDGEACERCGGIIEKTTLSSRPFYWCPHCQK) form an FPG-type zinc finger. Catalysis depends on Arg253, which acts as the Proton donor; for delta-elimination activity.

The protein belongs to the FPG family. It depends on Zn(2+) as a cofactor.

The enzyme catalyses 2'-deoxyribonucleotide-(2'-deoxyribose 5'-phosphate)-2'-deoxyribonucleotide-DNA = a 3'-end 2'-deoxyribonucleotide-(2,3-dehydro-2,3-deoxyribose 5'-phosphate)-DNA + a 5'-end 5'-phospho-2'-deoxyribonucleoside-DNA + H(+). Functionally, involved in base excision repair of DNA damaged by oxidation or by mutagenic agents. Acts as a DNA glycosylase that recognizes and removes damaged bases. Has a preference for oxidized pyrimidines, such as thymine glycol, 5,6-dihydrouracil and 5,6-dihydrothymine. Has AP (apurinic/apyrimidinic) lyase activity and introduces nicks in the DNA strand. Cleaves the DNA backbone by beta-delta elimination to generate a single-strand break at the site of the removed base with both 3'- and 5'-phosphates. This chain is Endonuclease 8, found in Salmonella dublin (strain CT_02021853).